The primary structure comprises 147 residues: Myosin-ID light chain (147 aa).

EF-hand domains follow at residues 8–43, 79–114, and 115–147; these read EAQS…LGQN, FDEK…LGER, and LPEE…MLKK. Asp21, Asn23, Asp25, Lys27, and Glu32 together coordinate Ca(2+).

Myosin I is a dimer of a heavy and a light chain. Inability to self-assemble into filaments. Interacts with myoD. Does not interact with myoB or myoC.

It is found in the cytoplasm. Functions as the light chain for myosin-D. Has low affinity for calcium. The polypeptide is Myosin-ID light chain (mlcD) (Dictyostelium discoideum (Social amoeba)).